Reading from the N-terminus, the 1626-residue chain is Collagen alpha-1(XXII) chain (1626 aa).

The N-terminal stretch at 1-27 is a signal peptide; the sequence is MAGLRGNAVAGLLWMLLLWSGGGGCQA. Residues 38–213 enclose the VWFA domain; sequence DLVFLLDTSS…NAIDKIRGKL (176 aa). A Laminin G-like domain is found at 239-427; sequence GTKEITGFDL…LQRIVIYCDS (189 aa). An N-linked (GlcNAc...) asparagine glycan is attached at Asn375. Collagen-like domains follow at residues 481 to 520, 526 to 565, 566 to 625, 657 to 708, 714 to 773, 774 to 833, 868 to 922, 925 to 984, 1047 to 1095, 1118 to 1155, 1156 to 1215, 1249 to 1308, 1315 to 1374, 1387 to 1446, 1495 to 1550, and 1575 to 1604; these read GEKG…GDVG, QGEK…PGEV, GMRG…PGPS, GEQG…GIPG, GPPG…PGER, GEDG…PGLK, GPKG…GAPG, GAPG…PGKG, AGPP…PGKP, PPGP…AGPP, GLPG…AGPP, GKPG…PGKD, GPQG…PGEK, GEPG…PGPP, SQGR…PGAP, and DGLP…PPGQ. 4 disordered regions span residues 506–1002, 1019–1103, 1119–1458, and 1491–1609; these read PVGA…GPLG, GGQC…LLSP, PGPP…RGES, and YMKS…DPSQ. The segment covering 544-553 has biased composition (basic and acidic residues); sequence DGSKGMRGEP. Pro residues predominate over residues 571–580; it reads QGPPGLPGPP. The segment covering 591–606 has biased composition (basic and acidic residues); sequence ERGEKGTRGEKGERGL. Low complexity predominate over residues 661–670; sequence APGPRGHQGA. 2 stretches are compositionally biased toward pro residues: residues 715–728 and 742–751; these read PPGP…PGPG and KPGPPGPTGP. 2 stretches are compositionally biased toward basic and acidic residues: residues 769-778 and 815-826; these read EPGERGEDGL and RGEKGDQGEKGE. A compositionally biased stretch (low complexity) spans 908 to 939; it reads AHGAPGAAGNPGAPGHVGAPGPSGPPGSVGAP. The segment covering 945–957 has biased composition (basic and acidic residues); that stretch reads PGKDGERGEKGAA. Low complexity-rich tracts occupy residues 959 to 974 and 1056 to 1065; these read EEGS…DPGA and PGDKGSPGSR. Composition is skewed to basic and acidic residues over residues 1131–1151 and 1173–1185; these read KGDK…KKGE and RGAD…KGDQ. Low complexity predominate over residues 1205 to 1223; it reads ADGIAGAAGPPGIQGSPGK. A compositionally biased stretch (basic and acidic residues) spans 1241–1250; sequence EEGKEGRDGK. The span at 1260–1275 shows a compositional bias: low complexity; it reads AGEPGLPGPEGARGPP. A compositionally biased stretch (low complexity) spans 1379-1389; it reads KEGVPGKPGEP. Basic and acidic residues predominate over residues 1391-1404; that stretch reads FKGERGDPGIKGDK. The span at 1405-1414 shows a compositional bias: gly residues; the sequence is GPPGGKGQPG. Positions 1440 to 1449 are enriched in pro residues; sequence VGPPGPPGQP. Gly residues predominate over residues 1521-1530; the sequence is GRPGQGGLEG. The segment covering 1595-1604 has biased composition (pro residues); the sequence is LPGPPGPPGQ.

This sequence belongs to the fibril-associated collagens with interrupted helices (FACIT) family. As to expression, restrictive expression is observed at tissue junctions such as the myotendinous junction in skeletal and heart muscle, the articular cartilage-synovial fluid junction, or the border between the anagen hair follicle and the dermis in the skin. It is deposited in the basement membrane zone of the myotendinous junction and the hair follicle and associated with the extrafibrillar matrix in cartilage.

Its subcellular location is the secreted. It localises to the extracellular space. It is found in the extracellular matrix. The protein resides in the cytoplasm. Functionally, acts as a cell adhesion ligand for skin epithelial cells and fibroblasts. The sequence is that of Collagen alpha-1(XXII) chain (COL22A1) from Homo sapiens (Human).